Here is a 383-residue protein sequence, read N- to C-terminus: Na(+)/H(+) antiporter NhaA (383 aa).

A run of 11 helical transmembrane segments spans residues 21 to 41 (AAGVMLMAASAIGMVFANSIW), 56 to 76 (LTMRGWINDALMALFFLLAGL), 94 to 114 (LLPGVAAIGGMVVPAIIYVAF), 123 to 143 (GWAIPTATDIAFALGVLALAG), 152 to 172 (VFLTALAIVDDLGAVIVIALF), 175 to 195 (GTLSVLPGAGVAAILGLLLML), 202 to 222 (TLFPYLLAGVPLWWLTLKSGI), 258 to 278 (FVILPLFGFANAGISLHGVTV), 287 to 307 (LGVGAALMLGKPLGVLGAVSI), 326 to 346 (IGIAFLCGIGFTMSLFIAILA), and 355 to 375 (QIKLGILSGSMLSGLCGYILL).

Belongs to the NhaA Na(+)/H(+) (TC 2.A.33) antiporter family.

Its subcellular location is the cell inner membrane. It catalyses the reaction Na(+)(in) + 2 H(+)(out) = Na(+)(out) + 2 H(+)(in). Na(+)/H(+) antiporter that extrudes sodium in exchange for external protons. In Granulibacter bethesdensis (strain ATCC BAA-1260 / CGDNIH1), this protein is Na(+)/H(+) antiporter NhaA.